The primary structure comprises 371 residues: MSHNSFGHLFRVTTFGESHGPALGCVVDGCPPLIPLEAAEIQAELDRRRPGQSRFTTQRREPDTVRILSGVFADDRTGGRQLTTGTPIALMIENVDQRSKDYSEIRDTYRPGHADYTYEAKYGIRDYRGGGRSSARETAARVAAGAIARKVLPGVTIRGALVQLGPHAIDRARFDWNEVGNNPFFCPDAVAAVQWAEILDEIRKDGSSIGAVIEVVAEGVPPGLGAPVYGKLDADLAAAMMSINAVKGVEIGDGFAAATLRGEENADEMRPGNGGAPAFLANHAGGILGGISSGQPIVCRFAVKPTSSILTPRASVTRDNRPAEVVTKGRHDPCVGIRAVPVGEAMMACVLADHYLRHRGQVGERAPFREG.

Residues R48 and R54 each contribute to the NADP(+) site. Residues R132 to S134, N244 to A245, G289, K304 to S308, and R330 contribute to the FMN site.

The protein belongs to the chorismate synthase family. As to quaternary structure, homotetramer. Requires FMNH2 as cofactor.

It carries out the reaction 5-O-(1-carboxyvinyl)-3-phosphoshikimate = chorismate + phosphate. The protein operates within metabolic intermediate biosynthesis; chorismate biosynthesis; chorismate from D-erythrose 4-phosphate and phosphoenolpyruvate: step 7/7. Catalyzes the anti-1,4-elimination of the C-3 phosphate and the C-6 proR hydrogen from 5-enolpyruvylshikimate-3-phosphate (EPSP) to yield chorismate, which is the branch point compound that serves as the starting substrate for the three terminal pathways of aromatic amino acid biosynthesis. This reaction introduces a second double bond into the aromatic ring system. This is Chorismate synthase from Methylobacterium nodulans (strain LMG 21967 / CNCM I-2342 / ORS 2060).